Consider the following 848-residue polypeptide: DIS3-like exonuclease 2 (848 aa).

The segment at 153–173 (KGDRNSGKTDNNSPNKTEKRC) is disordered. Asp-345 and Asp-354 together coordinate Mg(2+).

This sequence belongs to the RNR ribonuclease family. DIS3L2 subfamily. Mg(2+) serves as cofactor. Mn(2+) is required as a cofactor. In terms of processing, cleaved by caspase ced-3 in vitro.

It localises to the cytoplasm. Its subcellular location is the P-body. In terms of biological role, 3'-5'-exoribonuclease that specifically recognizes RNAs polyuridylated at their 3' end and mediates their degradation. Component of an exosome-independent RNA degradation pathway that mediates degradation of cytoplasmic mRNAs that have been deadenylated and subsequently uridylated at their 3'. The protein is DIS3-like exonuclease 2 of Caenorhabditis elegans.